Here is a 480-residue protein sequence, read N- to C-terminus: Probable tRNA N6-adenosine threonylcarbamoyltransferase, mitochondrial (480 aa).

The transit peptide at 1–86 directs the protein to the mitochondrion; it reads MVRLFLTLSP…NPNFDDNLVV (86 aa). 2 residues coordinate a divalent metal cation: histidine 194 and histidine 198. Substrate is bound by residues 217–221, aspartate 250, glycine 265, glutamate 269, 373–374, and threonine 401; these read LISGG and SN. Residue aspartate 402 participates in a divalent metal cation binding.

It belongs to the KAE1 / TsaD family. Homodimer. It depends on a divalent metal cation as a cofactor. Expressed in young developing leaves, roots, flowers and siliques.

The protein resides in the mitochondrion inner membrane. The catalysed reaction is L-threonylcarbamoyladenylate + adenosine(37) in tRNA = N(6)-L-threonylcarbamoyladenosine(37) in tRNA + AMP + H(+). In terms of biological role, required for the formation of a threonylcarbamoyl group on adenosine at position 37 (t(6)A37) in mitochondrial tRNAs that read codons beginning with adenine. Probably involved in the transfer of the threonylcarbamoyl moiety of threonylcarbamoyl-AMP (TC-AMP) to the N6 group of A37. Involved in mitochondrial genome maintenance. May have a role in embryonic development in plants. The chain is Probable tRNA N6-adenosine threonylcarbamoyltransferase, mitochondrial from Arabidopsis thaliana (Mouse-ear cress).